Here is a 412-residue protein sequence, read N- to C-terminus: Multidrug resistance protein MdtG (412 aa).

The next 10 membrane-spanning stretches (helical) occupy residues Leu-20–Phe-40, Leu-62–Ala-82, Leu-96–Ile-116, Ala-119–Ile-139, Thr-150–Ala-170, Pro-177–Ile-197, Val-225–Ile-245, Leu-260–Pro-280, Ile-294–Thr-314, and Thr-382–Leu-402.

It belongs to the major facilitator superfamily. DHA1 family. MdtG (TC 2.A.1.2.20) subfamily.

Its subcellular location is the cell inner membrane. This Rahnella sp. (strain Y9602) protein is Multidrug resistance protein MdtG.